Consider the following 234-residue polypeptide: uncharacterized protein (234 aa).

This is an uncharacterized protein from Acheta domesticus (House cricket).